Consider the following 273-residue polypeptide: MHEAQIRVAIAGAGGRMGRQLIQAAMAMEGVQLGAALEREGSSLLGSDAGELAGAGKSGVIVQSSLEAVKDDFDVFIDFTRPEGTLTHLAFCRQHGKGMVIGTTGFDDAGKQAIREASQEIAIVFAANFSVGVNVMLKLLEKAAKVMGYYSDIEIIEAHHRHKVDAPSGTALEMGEAIAGALDKNLKDCAVYSREGYTGERVPGTIGFATVRAGDIVGEHTAMFADIGERVEITHKASSRMTFANGALRAALWLKTKKNGLFDMRDVLGLDVL.

NAD(+)-binding positions include 12–17 (GAGGRM) and glutamate 38. Arginine 39 contributes to the NADP(+) binding site. Residues 102–104 (GTT) and 126–129 (AANF) each bind NAD(+). Catalysis depends on histidine 159, which acts as the Proton donor/acceptor. (S)-2,3,4,5-tetrahydrodipicolinate is bound at residue histidine 160. Lysine 163 (proton donor) is an active-site residue. A (S)-2,3,4,5-tetrahydrodipicolinate-binding site is contributed by 169–170 (GT).

Belongs to the DapB family. As to quaternary structure, homotetramer.

It is found in the cytoplasm. The enzyme catalyses (S)-2,3,4,5-tetrahydrodipicolinate + NAD(+) + H2O = (2S,4S)-4-hydroxy-2,3,4,5-tetrahydrodipicolinate + NADH + H(+). The catalysed reaction is (S)-2,3,4,5-tetrahydrodipicolinate + NADP(+) + H2O = (2S,4S)-4-hydroxy-2,3,4,5-tetrahydrodipicolinate + NADPH + H(+). It functions in the pathway amino-acid biosynthesis; L-lysine biosynthesis via DAP pathway; (S)-tetrahydrodipicolinate from L-aspartate: step 4/4. In terms of biological role, catalyzes the conversion of 4-hydroxy-tetrahydrodipicolinate (HTPA) to tetrahydrodipicolinate. The sequence is that of 4-hydroxy-tetrahydrodipicolinate reductase from Salmonella paratyphi A (strain ATCC 9150 / SARB42).